A 183-amino-acid polypeptide reads, in one-letter code: Holliday junction branch migration complex subunit RuvA (183 aa).

Residues 1–63 form a domain I region; it reads MIVGLIGVVE…EDAHLLYGFL (63 aa). Positions 64–139 are domain II; the sequence is EESEKILFER…FFIQDENRPA (76 aa). Position 139 (Ala-139) is a region of interest, flexible linker. Residues 139 to 183 are domain III; it reads ARNEVFLALESLGFKSAEINPVLKTLKPHLSIEAAIKEALQQLRS.

Belongs to the RuvA family. In terms of assembly, homotetramer. Forms an RuvA(8)-RuvB(12)-Holliday junction (HJ) complex. HJ DNA is sandwiched between 2 RuvA tetramers; dsDNA enters through RuvA and exits via RuvB. An RuvB hexamer assembles on each DNA strand where it exits the tetramer. Each RuvB hexamer is contacted by two RuvA subunits (via domain III) on 2 adjacent RuvB subunits; this complex drives branch migration. In the full resolvosome a probable DNA-RuvA(4)-RuvB(12)-RuvC(2) complex forms which resolves the HJ.

Its subcellular location is the cytoplasm. Its function is as follows. The RuvA-RuvB-RuvC complex processes Holliday junction (HJ) DNA during genetic recombination and DNA repair, while the RuvA-RuvB complex plays an important role in the rescue of blocked DNA replication forks via replication fork reversal (RFR). RuvA specifically binds to HJ cruciform DNA, conferring on it an open structure. The RuvB hexamer acts as an ATP-dependent pump, pulling dsDNA into and through the RuvAB complex. HJ branch migration allows RuvC to scan DNA until it finds its consensus sequence, where it cleaves and resolves the cruciform DNA. The protein is Holliday junction branch migration complex subunit RuvA of Helicobacter pylori (strain J99 / ATCC 700824) (Campylobacter pylori J99).